Here is a 143-residue protein sequence, read N- to C-terminus: Nucleoside diphosphate kinase (143 aa).

ATP-binding residues include Lys11, Phe59, Arg87, Thr93, Arg104, and Asn114. His117 acts as the Pros-phosphohistidine intermediate in catalysis.

It belongs to the NDK family. As to quaternary structure, homotetramer. Requires Mg(2+) as cofactor.

It localises to the cytoplasm. It carries out the reaction a 2'-deoxyribonucleoside 5'-diphosphate + ATP = a 2'-deoxyribonucleoside 5'-triphosphate + ADP. The catalysed reaction is a ribonucleoside 5'-diphosphate + ATP = a ribonucleoside 5'-triphosphate + ADP. Functionally, major role in the synthesis of nucleoside triphosphates other than ATP. The ATP gamma phosphate is transferred to the NDP beta phosphate via a ping-pong mechanism, using a phosphorylated active-site intermediate. This Shewanella halifaxensis (strain HAW-EB4) protein is Nucleoside diphosphate kinase.